The chain runs to 196 residues: Molybdenum cofactor guanylyltransferase (196 aa).

Residues 10–12, lysine 23, asparagine 51, aspartate 69, and aspartate 99 contribute to the GTP site; that span reads LAG. A Mg(2+)-binding site is contributed by aspartate 99.

It belongs to the MobA family. Monomer. Mg(2+) is required as a cofactor.

The protein localises to the cytoplasm. It carries out the reaction Mo-molybdopterin + GTP + H(+) = Mo-molybdopterin guanine dinucleotide + diphosphate. Transfers a GMP moiety from GTP to Mo-molybdopterin (Mo-MPT) cofactor (Moco or molybdenum cofactor) to form Mo-molybdopterin guanine dinucleotide (Mo-MGD) cofactor. This chain is Molybdenum cofactor guanylyltransferase, found in Shewanella loihica (strain ATCC BAA-1088 / PV-4).